We begin with the raw amino-acid sequence, 652 residues long: Probable protein phosphatase 2C 19 (652 aa).

Residues 265–517 (KYVVSSMQGW…DNTTVILVLF (253 aa)) form the PPM-type phosphatase domain. 4 residues coordinate Mn(2+): D300, G301, E467, and D508. A disordered region spans residues 524-567 (AVPPVDTDTDTDSHTGDDVDNNDPANEVDPTANAGSDDSNTSDE).

It belongs to the PP2C family. It depends on Mg(2+) as a cofactor. Mn(2+) is required as a cofactor.

It carries out the reaction O-phospho-L-seryl-[protein] + H2O = L-seryl-[protein] + phosphate. It catalyses the reaction O-phospho-L-threonyl-[protein] + H2O = L-threonyl-[protein] + phosphate. This is Probable protein phosphatase 2C 19 from Oryza sativa subsp. japonica (Rice).